The primary structure comprises 29 residues: Cycloviolacin-O22 (29 aa).

Residues 1-29 (GLPICGETCVGGTCNTPGCTCSWPVCTRN) constitute a cross-link (cyclopeptide (Gly-Asn)). Cystine bridges form between C5–C19, C9–C21, and C14–C26.

This is a cyclic peptide. In terms of tissue distribution, expressed in roots and runners but not in leaves, petals and petioles (at protein level).

Probably participates in a plant defense mechanism. This is Cycloviolacin-O22 from Viola odorata (Sweet violet).